Here is a 273-residue protein sequence, read N- to C-terminus: Putative phosphoenolpyruvate synthase regulatory protein (273 aa).

153 to 160 is an ADP binding site; it reads GVSRSGKT.

The protein belongs to the pyruvate, phosphate/water dikinase regulatory protein family. PSRP subfamily.

The enzyme catalyses [pyruvate, water dikinase] + ADP = [pyruvate, water dikinase]-phosphate + AMP + H(+). It carries out the reaction [pyruvate, water dikinase]-phosphate + phosphate + H(+) = [pyruvate, water dikinase] + diphosphate. In terms of biological role, bifunctional serine/threonine kinase and phosphorylase involved in the regulation of the phosphoenolpyruvate synthase (PEPS) by catalyzing its phosphorylation/dephosphorylation. The protein is Putative phosphoenolpyruvate synthase regulatory protein of Verminephrobacter eiseniae (strain EF01-2).